Consider the following 246-residue polypeptide: uncharacterized protein (246 aa).

The protein to M.jannaschii MJ1676.

This is an uncharacterized protein from Methanothermobacter thermautotrophicus (strain ATCC 29096 / DSM 1053 / JCM 10044 / NBRC 100330 / Delta H) (Methanobacterium thermoautotrophicum).